The sequence spans 401 residues: Imidazolonepropionase (401 aa).

The Fe(3+) site is built by histidine 66 and histidine 68. The Zn(2+) site is built by histidine 66 and histidine 68. 4-imidazolone-5-propanoate contacts are provided by arginine 75, tyrosine 138, and histidine 171. N-formimidoyl-L-glutamate is bound at residue tyrosine 138. Histidine 236 contributes to the Fe(3+) binding site. Histidine 236 serves as a coordination point for Zn(2+). Glutamine 239 is a 4-imidazolone-5-propanoate binding site. Aspartate 311 serves as a coordination point for Fe(3+). Aspartate 311 serves as a coordination point for Zn(2+). Residues asparagine 313 and glycine 315 each coordinate N-formimidoyl-L-glutamate. 4-imidazolone-5-propanoate is bound at residue threonine 316.

It belongs to the metallo-dependent hydrolases superfamily. HutI family. Requires Zn(2+) as cofactor. Fe(3+) serves as cofactor.

The protein resides in the cytoplasm. The enzyme catalyses 4-imidazolone-5-propanoate + H2O = N-formimidoyl-L-glutamate. The protein operates within amino-acid degradation; L-histidine degradation into L-glutamate; N-formimidoyl-L-glutamate from L-histidine: step 3/3. In terms of biological role, catalyzes the hydrolytic cleavage of the carbon-nitrogen bond in imidazolone-5-propanoate to yield N-formimidoyl-L-glutamate. It is the third step in the universal histidine degradation pathway. The chain is Imidazolonepropionase from Acinetobacter baumannii (strain AB0057).